The following is an 89-amino-acid chain: Small ribosomal subunit protein uS14 (89 aa).

This sequence belongs to the universal ribosomal protein uS14 family. Part of the 30S ribosomal subunit. Contacts proteins S3 and S10.

Its function is as follows. Binds 16S rRNA, required for the assembly of 30S particles and may also be responsible for determining the conformation of the 16S rRNA at the A site. This chain is Small ribosomal subunit protein uS14, found in Shouchella clausii (strain KSM-K16) (Alkalihalobacillus clausii).